The primary structure comprises 231 residues: 5'-methylthioadenosine/S-adenosylhomocysteine nucleosidase (231 aa).

The active-site Proton acceptor is E12. Substrate contacts are provided by residues G78, V153, and 174–175 (ME). D198 acts as the Proton donor in catalysis.

Belongs to the PNP/UDP phosphorylase family. MtnN subfamily.

The enzyme catalyses S-adenosyl-L-homocysteine + H2O = S-(5-deoxy-D-ribos-5-yl)-L-homocysteine + adenine. The catalysed reaction is S-methyl-5'-thioadenosine + H2O = 5-(methylsulfanyl)-D-ribose + adenine. It carries out the reaction 5'-deoxyadenosine + H2O = 5-deoxy-D-ribose + adenine. It functions in the pathway amino-acid biosynthesis; L-methionine biosynthesis via salvage pathway; S-methyl-5-thio-alpha-D-ribose 1-phosphate from S-methyl-5'-thioadenosine (hydrolase route): step 1/2. Its function is as follows. Catalyzes the irreversible cleavage of the glycosidic bond in both 5'-methylthioadenosine (MTA) and S-adenosylhomocysteine (SAH/AdoHcy) to adenine and the corresponding thioribose, 5'-methylthioribose and S-ribosylhomocysteine, respectively. Also cleaves 5'-deoxyadenosine, a toxic by-product of radical S-adenosylmethionine (SAM) enzymes, into 5-deoxyribose and adenine. This chain is 5'-methylthioadenosine/S-adenosylhomocysteine nucleosidase, found in Vibrio parahaemolyticus serotype O3:K6 (strain RIMD 2210633).